Consider the following 629-residue polypeptide: Leucine-rich repeat protein soc-2 homolog (629 aa).

Low complexity predominate over residues 1–19 (MNLCSSGATASTTSLSSTG). The segment at 1-133 (MNLCSSGATA…PTTKKSKPIQ (133 aa)) is disordered. Over residues 21–45 (RNGGTSEGGGEGAGGGGGSGGGGGN) the composition is skewed to gly residues. 20 LRR repeats span residues 149-170 (GIKR…VKEC), 172-193 (HLTE…IGCL), 195-217 (NLRN…QNCK), 218-239 (QLKV…IYRL), 241-262 (TLTT…LRQL), 264-285 (NLTM…IGAL), 287-308 (NLTT…IGNC), 310-331 (NLSA…IGNL), 333-355 (SLVR…KNCK), 356-377 (SMDE…MLAS), 380-401 (GLTT…GPAQ), 404-425 (NVYS…IFSR), 428-449 (GLTK…IGTW), 451-472 (NMVE…IMNL), 474-495 (NLEI…IGNM), 497-518 (KLRI…IGLL), 520-541 (ELQR…IGHL), 543-564 (NLTH…IGSL), 566-588 (GLEN…LALC), and 590-611 (NLKY…IQAG).

The protein belongs to the SHOC2 family.

In terms of biological role, acts as a Ras effector and participates in MAPK pathway activation. Probably acts as a regulatory subunit of protein phosphatase that specifically dephosphorylates Raf kinase and stimulate Raf activity at specialized signaling complexes upon Ras activation. In Drosophila pseudoobscura pseudoobscura (Fruit fly), this protein is Leucine-rich repeat protein soc-2 homolog (Sur-8).